Here is a 240-residue protein sequence, read N- to C-terminus: Poxin (240 aa).

H46 acts as the Proton donor in catalysis. Y181 functions as the Shared with catalytic histidine of dimeric partner in the catalytic mechanism. Catalysis depends on K185, which acts as the Proton acceptor; shared with catalytic histidine of dimeric partner.

The protein belongs to the poxin family. Homodimer.

It catalyses the reaction 2',3'-cGAMP + H2O = Gp(2'-5')Ap(3') + H(+). Nuclease that cleaves host 2',3'-cGAMP. The sequence is that of Poxin (P26) from Lepidoptera (butterflies and moths).